Reading from the N-terminus, the 575-residue chain is Cytokinin dehydrogenase 1 (575 aa).

Positions 1-31 are cleaved as a signal peptide; sequence MGLTSSLRFHRQNNKTFLGIFMILVLSCIPG. 3 N-linked (GlcNAc...) asparagine glycosylation sites follow: asparagine 14, asparagine 38, and asparagine 115. Residues 84 to 262 form the FAD-binding PCMH-type domain; that stretch reads YQLPPLAILH…TRARISLEPA (179 aa). Residues alanine 120, glycine 122, and glycine 124 each coordinate FAD. Histidine 125 bears the Pros-8alpha-FAD histidine mark. Serine 126, glutamine 130, aspartate 186, threonine 191, serine 197, isoleucine 201, and isoleucine 252 together coordinate FAD. Asparagine 303, asparagine 318, asparagine 437, and asparagine 467 each carry an N-linked (GlcNAc...) asparagine glycan. FAD-binding residues include tyrosine 498 and glutamine 536.

The protein belongs to the oxygen-dependent FAD-linked oxidoreductase family. It depends on FAD as a cofactor. As to expression, expressed in shoot apexes, lateral shoot meristems, growing tissues of young flowers, and weakly at the root-hypocotyl junction.

The protein resides in the vacuole. The catalysed reaction is N(6)-dimethylallyladenine + A + H2O = 3-methyl-2-butenal + adenine + AH2. Catalyzes the oxidation of cytokinins, a family of N(6)-substituted adenine derivatives that are plant hormones, where the substituent is an isopentenyl group. Catalyzes in vitro the oxidation of various types of cytokinin nucleotides that are known as direct products of cytokinin biosynthesis. Promotes adventitious root initiation downstream of MYC2-dependent jasmonate signaling. Cytokinin degraded by CKX1 is required for cell division in the female gametophyte by modulating the expression of cell cycle genes. The protein is Cytokinin dehydrogenase 1 (CKX1) of Arabidopsis thaliana (Mouse-ear cress).